The following is a 908-amino-acid chain: WD repeat-containing protein 44 (908 aa).

Residues 1-163 form a binding activity region; the sequence is MMPLKMCTWG…SSADQLDASK (163 aa). Phosphoserine occurs at positions 17, 40, 61, 71, 86, and 116. 2 stretches are compositionally biased toward polar residues: residues 108–120 and 148–157; these read QQGS…QNAA and NNLTEVSSAD. Disordered regions lie at residues 108–158, 202–273, 309–341, 391–418, and 454–474; these read QQGS…SADQ, APAK…KDNI, TAQE…RELT, VSND…RLKQ, and DEVF…GMPY. Thr-151 and Thr-211 each carry phosphothreonine. The important for interaction with ARHGAP26 AND ARHGAP10 stretch occupies residues 203 to 249; that stretch reads PAKPPRHLTPEPDIVASTKKPVPARPPPPTNFPPPRPPPPSRPAPPP. The segment covering 225 to 248 has biased composition (pro residues); the sequence is PARPPPPTNFPPPRPPPPSRPAPP. Ser-254 bears the Phosphoserine mark. Residues 254 to 270 show a composition bias toward basic and acidic residues; the sequence is SDLEFEALKTPDLDVPK. Position 263 is a phosphothreonine (Thr-263). Positions 326–339 are important for interaction with RAB11A; that stretch reads VMGPQRPRSNSGRE. Residues Ser-334 and Ser-336 each carry the phosphoserine modification. Phosphothreonine occurs at positions 341 and 396. Phosphoserine occurs at positions 398, 465, 466, and 467. The span at 462–471 shows a compositional bias: acidic residues; the sequence is DDPSSSDDEG. At Tyr-474 the chain carries Phosphotyrosine. A WD 1 repeat occupies 504–543; sequence EHMGAVWTMKFSHCGRLLASAGQDNIVRIWALKNAFDYFN. The tract at residues 552–587 is disordered; that stretch reads EGRVSPSPSQESLSSSKSDTDMGVCSGTDEDPDDKN. Phosphoserine is present on residues Ser-556 and Ser-560. Over residues 556–568 the composition is skewed to low complexity; that stretch reads SPSPSQESLSSSK. WD repeat units lie at residues 600-638, 640-680, 685-724, 735-774, and 779-818; these read GHTA…CLCC, QHID…VALW, GQTK…YHTQ, KVGR…LSMK, and VNSS…SKFT.

As to quaternary structure, interacts preferentially with the GTP-bound form of RAB11 when membrane-associated. Interacts with GRAF1/ARHGAP26 or GRAF2/ARHGAP10; the interaction connects the endoplasmic reticulum (ER) with the endosomal tubule. Interacts with VAPA (via MSP domain) or VAPB (via MSP domain); the interaction connects the ER with the endosomal tubule. Does not bind to other Rab and Rho small G proteins. Phosphorylated by ATK1; the phosphorylation stabilizes its interaction with RAB11A and RAB11B. As to expression, expressed in heart; brain; spleen; lung; liver; muscle and kidney.

It is found in the cytoplasm. The protein resides in the cytosol. It localises to the perinuclear region. Its subcellular location is the endosome membrane. The protein localises to the golgi apparatus. It is found in the trans-Golgi network. Functionally, downstream effector for Rab11 which regulates Rab11 intracellular membrane trafficking functions such as endocytic recycling, intracellular ciliogenesis and protein export. ATK1-mediated phosphorylation of WDR44 induces binding to Rab11 which activates endocytic recycling of transferrin receptor back to the plasma membrane. When bound to Rab11, prevents the formation of the ciliogenic Rab11-Rabin8/RAB3IP-RAB11FIP3 complex, therefore inhibiting preciliary trafficking and ciliogenesis. May participate in neo-synthesized protein export by connecting the endoplasmic reticulum (ER) with the endosomal tubule via direct interactions with the integral ER proteins VAPA or VAPB and the endosomal protein GRAFs (GRAF1/ARHGAP26 or GRAF2/ARHGAP10), which facilitates the transfer of proteins such as E-cadherin, MPP14 and CFTR into a Rab8-Rab10-Rab11-dependent export route. This Rattus norvegicus (Rat) protein is WD repeat-containing protein 44.